We begin with the raw amino-acid sequence, 336 residues long: MQDQRELGGAAGQGLPLCAFLSDLPEQGGGVSLRQVSKDSGAPGRQSGDAVEWARLRCALPPPDGEARTSGGSCEGLSTSTARGPDPGEHSGAWGEFEVFQESSASSEQFCQSFELQERPAASQPWRTASAQKQHGSSQPHQGGVTGTGAIAASELVVSCEDVFRSAFQEVPVPQATEGISTLDHFLEARNEESSGLESAQKLCSESRKLWRALHNTGTMTISRCTWSESRSRENFLPVLGVDAAQKSLSGSPGRTLGEPGLHEPEELGFHLQRCRALIQTKLSGTPTGGQGSLITYSLFLKTPIHGNGQYITTPRKKKTFGPRNLKLTLFNSDIY.

2 disordered regions span residues Gly-29–Ala-93 and Leu-116–Gly-147. Composition is skewed to polar residues over residues Ser-70 to Ala-82 and Pro-125 to His-141.

This is an uncharacterized protein from Bos taurus (Bovine).